Consider the following 341-residue polypeptide: Ribose-phosphate pyrophosphokinase 5 (341 aa).

Positions 152, 154, and 167 each coordinate Mg(2+).

Belongs to the ribose-phosphate pyrophosphokinase family.

It localises to the cytoplasm. It carries out the reaction D-ribose 5-phosphate + ATP = 5-phospho-alpha-D-ribose 1-diphosphate + AMP + H(+). Its pathway is metabolic intermediate biosynthesis; 5-phospho-alpha-D-ribose 1-diphosphate biosynthesis; 5-phospho-alpha-D-ribose 1-diphosphate from D-ribose 5-phosphate (route I): step 1/1. Functionally, 5-phosphoribose 1-diphosphate synthase involved in nucleotide, histidine, and tryptophan biosynthesis. Active in heteromultimeric complexes with other 5-phosphoribose 1-diphosphate synthases. This is Ribose-phosphate pyrophosphokinase 5 from Schizosaccharomyces pombe (strain 972 / ATCC 24843) (Fission yeast).